We begin with the raw amino-acid sequence, 1046 residues long: MAKVRVYELAKEFGVESKVVMAKLQELGEFVRSASSTIEAPVVRKLTDALQQGNGGKAAPRKAAPAKPGAPSPAQAARPAAPRPPAPKPAAAERPAAAERPAAAPAAPGPRPGPKPAPRPAPAAPAPAAPEFTAPPSAPAAPAAAASGPRPGARPGAPKPGGARPATPGQGQGGQVRGERTDRGDRGDRGDRQGAARPGGQAPRPGARPAGPRPGNNPFTSGGSTGMARPQAPRPGGAPRPGGAGAPGGPRPQGAGGQDRAPRPQGGPGGAPRPQGGPGGARPTPGGMPRPQAPRPGGAPGGNRPNPGMMPQRPAAGPRPGGGGPGGRGPGGGGRPGGPGGGGGRPGGGGFAGRPGGGGGGFAGRPGGPGGGGGGFAGRPGGPGGGGGGRPGFGGRPGGPGGRGGTQGAFGRPGGPARRGRKSKRQRRQEYEAMQAPSVGGVMLPRGNGQSVRLSRGASLTDFAEKIGANPASLVGVMMNLGEMVTATQSVSDETLKLLADEMNFVLEIVSPEEEDRELLESFDIEFGEDEGGEEFLVARPPVVTVMGHVDHGKTRLLDTIRKTNVVAGEAGGITQHIGAYQVTTEVNDEERKITFIDTPGHEAFTAMRARGAKSTDIAILVVAANDGVMPQTIEALNHAKAADVPIVVAVNKIDVEGADPTKVRGQLTEFGLVAEEYGGDTMFVDISAKQGLNIESLLEAVVLTADASLDLRANPEQDAQGIAIESHLDRGRGAVATVLVQRGTLRVGDTMVVGDAYGRVRAMLDDKGENVEEAGPSTPVLVLGLTNVPGAGDNFLVVDEDRTARQIAEKRAARERNANFARRGVRFSLENLDEALKAGLVQELNLIIKGDASGSVEALESSLLQLDVGEEVDIRILHRGVGAVTESDINLATGSDAIVIGFNVRAAGRAAQMAEREGVDVRYYSVIYQAIEEIEAALKGMLKPEYEEVELGTAEIREVFKSSKLGNIAGVLVRSGEVKRNTKARLIRDGKVIAESLNISGLRRFKDDVTEIREGFEGGINLGNFNDIKVDDVIATYEMREKPRS.

The segment at 49 to 450 (ALQQGNGGKA…GVMLPRGNGQ (402 aa)) is disordered. Composition is skewed to low complexity over residues 57 to 80 (KAAP…ARPA) and 89 to 106 (PAAA…AAPA). Pro residues predominate over residues 107 to 128 (APGPRPGPKPAPRPAPAAPAPA). Over residues 129-169 (APEFTAPPSAPAAPAAAASGPRPGARPGAPKPGGARPATPG) the composition is skewed to low complexity. A compositionally biased stretch (basic and acidic residues) spans 177 to 194 (RGERTDRGDRGDRGDRQG). Low complexity predominate over residues 195–214 (AARPGGQAPRPGARPAGPRP). Gly residues-rich tracts occupy residues 239–248 (PRPGGAGAPG) and 266–280 (GGPG…GPGG). Residues 302 to 318 (GNRPNPGMMPQRPAAGP) are compositionally biased toward low complexity. The span at 319–414 (RPGGGGPGGR…GTQGAFGRPG (96 aa)) shows a compositional bias: gly residues. Positions 418–427 (RRGRKSKRQR) are enriched in basic residues. The 173-residue stretch at 539–711 (ARPPVVTVMG…VVLTADASLD (173 aa)) folds into the tr-type G domain. The segment at 548 to 555 (GHVDHGKT) is G1. A GTP-binding site is contributed by 548–555 (GHVDHGKT). Residues 573–577 (GITQH) are G2. Residues 598-601 (DTPG) are G3. GTP contacts are provided by residues 598–602 (DTPGH) and 652–655 (NKID). Positions 652-655 (NKID) are G4. Residues 688–690 (SAK) are G5.

The protein belongs to the TRAFAC class translation factor GTPase superfamily. Classic translation factor GTPase family. IF-2 subfamily.

The protein resides in the cytoplasm. In terms of biological role, one of the essential components for the initiation of protein synthesis. Protects formylmethionyl-tRNA from spontaneous hydrolysis and promotes its binding to the 30S ribosomal subunits. Also involved in the hydrolysis of GTP during the formation of the 70S ribosomal complex. The polypeptide is Translation initiation factor IF-2 (Streptomyces avermitilis (strain ATCC 31267 / DSM 46492 / JCM 5070 / NBRC 14893 / NCIMB 12804 / NRRL 8165 / MA-4680)).